Reading from the N-terminus, the 230-residue chain is Demethylmenaquinone methyltransferase (230 aa).

S-adenosyl-L-methionine-binding positions include Thr-62, Asp-80, 100-101 (DA), and Ser-117.

This sequence belongs to the class I-like SAM-binding methyltransferase superfamily. MenG/UbiE family.

The enzyme catalyses a 2-demethylmenaquinol + S-adenosyl-L-methionine = a menaquinol + S-adenosyl-L-homocysteine + H(+). The protein operates within quinol/quinone metabolism; menaquinone biosynthesis; menaquinol from 1,4-dihydroxy-2-naphthoate: step 2/2. In terms of biological role, methyltransferase required for the conversion of demethylmenaquinol (DMKH2) to menaquinol (MKH2). This Mycolicibacterium paratuberculosis (strain ATCC BAA-968 / K-10) (Mycobacterium paratuberculosis) protein is Demethylmenaquinone methyltransferase.